The chain runs to 475 residues: Ribulose bisphosphate carboxylase large chain (475 aa).

Positions 1 to 2 (MS) are excised as a propeptide. Proline 3 carries the N-acetylproline modification. Residue lysine 14 is modified to N6,N6,N6-trimethyllysine. Residues asparagine 123 and threonine 173 each coordinate substrate. Lysine 175 functions as the Proton acceptor in the catalytic mechanism. Substrate is bound at residue lysine 177. Mg(2+) contacts are provided by lysine 201, aspartate 203, and glutamate 204. Residue lysine 201 is modified to N6-carboxylysine. The active-site Proton acceptor is the histidine 294. Arginine 295, histidine 327, and serine 379 together coordinate substrate.

The protein belongs to the RuBisCO large chain family. Type I subfamily. In terms of assembly, heterohexadecamer of 8 large chains and 8 small chains. Requires Mg(2+) as cofactor.

The protein resides in the plastid. It carries out the reaction 2 (2R)-3-phosphoglycerate + 2 H(+) = D-ribulose 1,5-bisphosphate + CO2 + H2O. The catalysed reaction is D-ribulose 1,5-bisphosphate + O2 = 2-phosphoglycolate + (2R)-3-phosphoglycerate + 2 H(+). Functionally, ruBisCO catalyzes two reactions: the carboxylation of D-ribulose 1,5-bisphosphate, the primary event in carbon dioxide fixation, as well as the oxidative fragmentation of the pentose substrate in the photorespiration process. Both reactions occur simultaneously and in competition at the same active site. The polypeptide is Ribulose bisphosphate carboxylase large chain (Aneura mirabilis (Parasitic liverwort)).